We begin with the raw amino-acid sequence, 225 residues long: Leucyl/phenylalanyl-tRNA--protein transferase (225 aa).

Belongs to the L/F-transferase family.

The protein localises to the cytoplasm. It catalyses the reaction N-terminal L-lysyl-[protein] + L-leucyl-tRNA(Leu) = N-terminal L-leucyl-L-lysyl-[protein] + tRNA(Leu) + H(+). It carries out the reaction N-terminal L-arginyl-[protein] + L-leucyl-tRNA(Leu) = N-terminal L-leucyl-L-arginyl-[protein] + tRNA(Leu) + H(+). The enzyme catalyses L-phenylalanyl-tRNA(Phe) + an N-terminal L-alpha-aminoacyl-[protein] = an N-terminal L-phenylalanyl-L-alpha-aminoacyl-[protein] + tRNA(Phe). Its function is as follows. Functions in the N-end rule pathway of protein degradation where it conjugates Leu, Phe and, less efficiently, Met from aminoacyl-tRNAs to the N-termini of proteins containing an N-terminal arginine or lysine. This Rhodopseudomonas palustris (strain TIE-1) protein is Leucyl/phenylalanyl-tRNA--protein transferase.